We begin with the raw amino-acid sequence, 235 residues long: Purine nucleoside phosphorylase DeoD-type (235 aa).

Histidine 4 contributes to the a purine D-ribonucleoside binding site. Residues glycine 20, arginine 24, arginine 43, and 87–90 (RVGT) each bind phosphate. A purine D-ribonucleoside contacts are provided by residues 178-180 (EME) and 202-203 (SD). Aspartate 203 acts as the Proton donor in catalysis.

Belongs to the PNP/UDP phosphorylase family. Homohexamer; trimer of homodimers.

It carries out the reaction a purine D-ribonucleoside + phosphate = a purine nucleobase + alpha-D-ribose 1-phosphate. The enzyme catalyses a purine 2'-deoxy-D-ribonucleoside + phosphate = a purine nucleobase + 2-deoxy-alpha-D-ribose 1-phosphate. In terms of biological role, catalyzes the reversible phosphorolytic breakdown of the N-glycosidic bond in the beta-(deoxy)ribonucleoside molecules, with the formation of the corresponding free purine bases and pentose-1-phosphate. The chain is Purine nucleoside phosphorylase DeoD-type from Geobacillus sp. (strain WCH70).